The primary structure comprises 134 residues: U-scoloptoxin(05)-Er2a (134 aa).

An N-terminal signal peptide occupies residues 1–19 (MTFVVAAVVLLTVVPLATP).

The protein belongs to the scoloptoxin-05 family. Post-translationally, contains 5 disulfide bonds. As to expression, expressed by the venom gland.

It is found in the secreted. The protein is U-scoloptoxin(05)-Er2a of Ethmostigmus rubripes (Giant centipede).